The chain runs to 218 residues: Octanoyltransferase (218 aa).

Residues 30–217 (GEAGELVWLV…SFARNFPPLA (188 aa)) form the BPL/LPL catalytic domain. Residues 68–75 (RGGQYTYH), 148–150 (AIG), and 161–163 (GIA) each bind substrate. Cys-179 serves as the catalytic Acyl-thioester intermediate.

Belongs to the LipB family.

The protein resides in the cytoplasm. It catalyses the reaction octanoyl-[ACP] + L-lysyl-[protein] = N(6)-octanoyl-L-lysyl-[protein] + holo-[ACP] + H(+). It participates in protein modification; protein lipoylation via endogenous pathway; protein N(6)-(lipoyl)lysine from octanoyl-[acyl-carrier-protein]: step 1/2. Functionally, catalyzes the transfer of endogenously produced octanoic acid from octanoyl-acyl-carrier-protein onto the lipoyl domains of lipoate-dependent enzymes. Lipoyl-ACP can also act as a substrate although octanoyl-ACP is likely to be the physiological substrate. The protein is Octanoyltransferase of Paracoccus denitrificans (strain Pd 1222).